The primary structure comprises 486 residues: Shutoff alkaline exonuclease (486 aa).

The protein belongs to the herpesviridae alkaline nuclease family. Forms a complex with the DNA polymerase, the DNA polymerase processivity factor, and the major DNA binding protein.

The protein resides in the host nucleus. The protein localises to the host cytoplasm. In terms of biological role, plays a role in processing non linear or branched viral DNA intermediates in order to promote the production of mature packaged unit-length linear progeny viral DNA molecules. Exhibits endonuclease and exonuclease activities and accepts both double-stranded and single-stranded DNA as substrate. Exonuclease digestion of DNA is in the 5'-&gt; 3' direction and the products are 5'-monophosphate nucleosides. Additionally, forms a recombinase with the major DNA-binding protein, which displays strand exchange activity. Also acts as a cytoplasmic RNA endonuclease that induces degradation of the majority of the cellular messenger RNAs during early lytic infection. The resulting inhibition of cellular protein synthesis serves to ensure maximal viral gene expression and evasion from host immune response. Internally cleaves host mRNAs which are then degraded by the cellular exonuclease XRN1. Bypasses therefore the regulatory steps of deadenylation and decapping normally required for XRN1 activation. In addition, inhibits host inflammasome activation to promote viral lytic replication by interacting with host AIM2 and disrupting its polymerization. The chain is Shutoff alkaline exonuclease (ORF37) from Human herpesvirus 8 type P (isolate GK18) (HHV-8).